We begin with the raw amino-acid sequence, 512 residues long: Glucose-6-phosphate 1-dehydrogenase (512 aa).

Residues arginine 61, 103-104 (EF), and lysine 171 contribute to the NADP(+) site. The substrate site is built by histidine 201, lysine 205, glutamate 239, and aspartate 258. Histidine 263 (proton acceptor) is an active-site residue. Lysine 360 and lysine 365 together coordinate substrate. The interval 479 to 512 (QDSSPSFPNYPAGSSGPKEADALIERDGRSWRPL) is disordered. Residues 496–512 (KEADALIERDGRSWRPL) show a composition bias toward basic and acidic residues.

This sequence belongs to the glucose-6-phosphate dehydrogenase family.

The catalysed reaction is D-glucose 6-phosphate + NADP(+) = 6-phospho-D-glucono-1,5-lactone + NADPH + H(+). It functions in the pathway carbohydrate degradation; pentose phosphate pathway; D-ribulose 5-phosphate from D-glucose 6-phosphate (oxidative stage): step 1/3. In terms of biological role, catalyzes the oxidation of glucose 6-phosphate to 6-phosphogluconolactone. This chain is Glucose-6-phosphate 1-dehydrogenase, found in Chlamydia pneumoniae (Chlamydophila pneumoniae).